Here is a 377-residue protein sequence, read N- to C-terminus: Chaperone protein DnaJ (377 aa).

The J domain occupies 5–70 (DYYQVLGVAK…QKRAAYDQYG (66 aa)). A CR-type zinc finger spans residues 137-215 (GYDTQIRVPS…CHGAGKTKET (79 aa)). Zn(2+)-binding residues include cysteine 150, cysteine 153, cysteine 167, cysteine 170, cysteine 189, cysteine 192, cysteine 203, and cysteine 206. CXXCXGXG motif repeat units lie at residues 150 to 157 (CEICHGSG), 167 to 174 (CPTCNGSG), 189 to 196 (CPKCHGTG), and 203 to 210 (CTHCHGAG).

The protein belongs to the DnaJ family. In terms of assembly, homodimer. The cofactor is Zn(2+).

The protein localises to the cytoplasm. Functionally, participates actively in the response to hyperosmotic and heat shock by preventing the aggregation of stress-denatured proteins and by disaggregating proteins, also in an autonomous, DnaK-independent fashion. Unfolded proteins bind initially to DnaJ; upon interaction with the DnaJ-bound protein, DnaK hydrolyzes its bound ATP, resulting in the formation of a stable complex. GrpE releases ADP from DnaK; ATP binding to DnaK triggers the release of the substrate protein, thus completing the reaction cycle. Several rounds of ATP-dependent interactions between DnaJ, DnaK and GrpE are required for fully efficient folding. Also involved, together with DnaK and GrpE, in the DNA replication of plasmids through activation of initiation proteins. The sequence is that of Chaperone protein DnaJ from Paraburkholderia phymatum (strain DSM 17167 / CIP 108236 / LMG 21445 / STM815) (Burkholderia phymatum).